A 252-amino-acid polypeptide reads, in one-letter code: Phosphate import ATP-binding protein PstB 2 (252 aa).

The ABC transporter domain maps to 6-247 (ISINDLSVYF…PQHKETEDYI (242 aa)). 38–45 (GPSGSGKS) is a binding site for ATP.

This sequence belongs to the ABC transporter superfamily. Phosphate importer (TC 3.A.1.7) family. In terms of assembly, the complex is composed of two ATP-binding proteins (PstB), two transmembrane proteins (PstC and PstA) and a solute-binding protein (PstS).

Its subcellular location is the cell membrane. It carries out the reaction phosphate(out) + ATP + H2O = ADP + 2 phosphate(in) + H(+). Functionally, part of the ABC transporter complex PstSACB involved in phosphate import. Responsible for energy coupling to the transport system. The chain is Phosphate import ATP-binding protein PstB 2 from Streptococcus thermophilus (strain CNRZ 1066).